A 361-amino-acid polypeptide reads, in one-letter code: 5-formaminoimidazole-4-carboxamide-1-(beta)-D-ribofuranosyl 5'-monophosphate synthetase (361 aa).

5-amino-1-(5-phospho-beta-D-ribosyl)imidazole-4-carboxamide-binding residues include His-27 and Ser-94. Residues 116–348 enclose the ATP-grasp domain; the sequence is RAILRWEAER…MGQRIAKEIK (233 aa). ATP contacts are provided by residues 146–208 and Glu-230; that span reads PDDI…ANYC. Position 258 (Asn-258) interacts with 5-amino-1-(5-phospho-beta-D-ribosyl)imidazole-4-carboxamide. 2 residues coordinate Mg(2+): Gln-297 and Glu-310.

It belongs to the phosphohexose mutase family. Mg(2+) is required as a cofactor. It depends on Mn(2+) as a cofactor.

The enzyme catalyses 5-amino-1-(5-phospho-beta-D-ribosyl)imidazole-4-carboxamide + formate + ATP = 5-formamido-1-(5-phospho-D-ribosyl)imidazole-4-carboxamide + ADP + phosphate. It functions in the pathway purine metabolism; IMP biosynthesis via de novo pathway; 5-formamido-1-(5-phospho-D-ribosyl)imidazole-4-carboxamide from 5-amino-1-(5-phospho-D-ribosyl)imidazole-4-carboxamide (formate route): step 1/1. Catalyzes the ATP- and formate-dependent formylation of 5-aminoimidazole-4-carboxamide-1-beta-d-ribofuranosyl 5'-monophosphate (AICAR) to 5-formaminoimidazole-4-carboxamide-1-beta-d-ribofuranosyl 5'-monophosphate (FAICAR) in the absence of folates. This is 5-formaminoimidazole-4-carboxamide-1-(beta)-D-ribofuranosyl 5'-monophosphate synthetase from Methanococcus maripaludis (strain C5 / ATCC BAA-1333).